Reading from the N-terminus, the 486-residue chain is Cardiolipin synthase A (486 aa).

2 helical membrane passes run 3–23 (TVYT…IAGV) and 38–58 (MAWL…YLAV). PLD phosphodiesterase domains lie at 219–246 (MDLR…VDPR) and 399–426 (EGGL…DMRS). Residues H224, K226, D231, H404, K406, and D411 contribute to the active site.

Belongs to the phospholipase D family. Cardiolipin synthase subfamily. ClsA sub-subfamily.

The protein localises to the cell inner membrane. It catalyses the reaction 2 a 1,2-diacyl-sn-glycero-3-phospho-(1'-sn-glycerol) = a cardiolipin + glycerol. In terms of biological role, catalyzes the reversible phosphatidyl group transfer from one phosphatidylglycerol molecule to another to form cardiolipin (CL) (diphosphatidylglycerol) and glycerol. This chain is Cardiolipin synthase A, found in Shigella flexneri.